The sequence spans 432 residues: Alpha-galactosidase (432 aa).

Lys-2–Asp-68 is an NAD(+) binding site. Asn-148 is a binding site for substrate. Residue Cys-169 participates in Mn(2+) binding. Catalysis depends on His-170, which acts as the Proton donor. Mn(2+) is bound at residue His-199.

It belongs to the glycosyl hydrolase 4 family. In terms of assembly, homodimer. It depends on Mn(2+) as a cofactor. NAD(+) serves as cofactor.

It localises to the cytoplasm. It carries out the reaction Hydrolysis of terminal, non-reducing alpha-D-galactose residues in alpha-D-galactosides, including galactose oligosaccharides, galactomannans and galactolipids.. In terms of biological role, catalyzes the hydrolysis of melibiose and alpha-galactosides of the raffinose family of oligosaccharides (RFOs) such as raffinose and stachyose. Cannot act on polymeric substrates such as locust bean gum. This is Alpha-galactosidase from Bacillus subtilis (strain 168).